A 741-amino-acid chain; its full sequence is Catalase-peroxidase 2 (741 aa).

An N-terminal signal peptide occupies residues 1 to 27 (MKINTLPTLSALTLAMSLALGAGMATA). The segment at residues 106-229 (WHSAGVYRIF…MGATQMGLIY (124 aa)) is a cross-link (tryptophyl-tyrosyl-methioninium (Trp-Tyr) (with M-255)). His-107 functions as the Proton acceptor in the catalytic mechanism. A cross-link (tryptophyl-tyrosyl-methioninium (Tyr-Met) (with W-106)) is located at residues 229-255 (YVNPEGPNGVPDPLASAKEIRDTFGRM). His-270 contacts heme b.

The protein belongs to the peroxidase family. Peroxidase/catalase subfamily. In terms of assembly, homodimer or homotetramer. Heme b is required as a cofactor. In terms of processing, formation of the three residue Trp-Tyr-Met cross-link is important for the catalase, but not the peroxidase activity of the enzyme.

The catalysed reaction is H2O2 + AH2 = A + 2 H2O. It carries out the reaction 2 H2O2 = O2 + 2 H2O. Functionally, bifunctional enzyme with both catalase and broad-spectrum peroxidase activity. This chain is Catalase-peroxidase 2, found in Shewanella oneidensis (strain ATCC 700550 / JCM 31522 / CIP 106686 / LMG 19005 / NCIMB 14063 / MR-1).